Consider the following 197-residue polypeptide: Dephospho-CoA kinase (197 aa).

The region spanning 3–197 (VYGLTGGIGS…QSLLHTHQNT (195 aa)) is the DPCK domain. 11 to 16 (GSGKTT) contributes to the ATP binding site.

Belongs to the CoaE family.

The protein localises to the cytoplasm. It carries out the reaction 3'-dephospho-CoA + ATP = ADP + CoA + H(+). Its pathway is cofactor biosynthesis; coenzyme A biosynthesis; CoA from (R)-pantothenate: step 5/5. In terms of biological role, catalyzes the phosphorylation of the 3'-hydroxyl group of dephosphocoenzyme A to form coenzyme A. The chain is Dephospho-CoA kinase from Hydrogenovibrio crunogenus (strain DSM 25203 / XCL-2) (Thiomicrospira crunogena).